Reading from the N-terminus, the 334-residue chain is Non-functional pseudokinase ZED1 (334 aa).

In terms of domain architecture, Protein kinase spans 49-334 (FSESRIISSW…KELKLIEKLS (286 aa)). Residues 55–63 (ISSWGYFIW) and lysine 76 contribute to the ATP site. Threonine 125 and threonine 177 each carry O-acetylthreonine.

Belongs to the protein kinase superfamily. Ser/Thr protein kinase family. ZRK subfamily. Interacts with RPP13L4/ZAR1. Component of an immune signaling complex made of, at least, SZE1, BKN2/SZE2, ZAR1 and ZED1. Binds directly to SZE1 at the plasma membrane. As to expression, expressed in seedlings, young leaves, floral organs, shoot apical meristems (SAM) and inflorescence stems.

The protein resides in the cytoplasm. Its subcellular location is the cytosol. The protein localises to the nucleus. It is found in the cell membrane. In terms of biological role, together with RPP13L4/ZAR1, involved in the ambient temperature (above 22 degrees Celsius)-sensitive aerial organ development. Together with RPP13L4/ZAR1, involved in the regulation of the ambient temperature-sensitive intersection of growth and immune response in the absence of pathogens, by repressing the transcription of SNC1. Probable non-functional kinase required for recognition of the Pseudomonas syringae type III effector HopZ1a by RPP13L4/ZAR1 and, together with SZE1 and SZE2, to trigger subsequent defense responses. May function as a decoy to trap HopZ1a in the ZAR1 complex for recognition by the plant immune system. This is Non-functional pseudokinase ZED1 from Arabidopsis thaliana (Mouse-ear cress).